Consider the following 231-residue polypeptide: Ribonuclease 3 (231 aa).

Residues 12 to 139 (LKAFLQKNNI…LIAAIYLDQG (128 aa)) form the RNase III domain. Mg(2+) is bound at residue Glu52. Asp56 is an active-site residue. Mg(2+) contacts are provided by Asp125 and Glu128. Glu128 is an active-site residue. Positions 165–231 (DPKSELQEYF…AANALSKLKT (67 aa)) constitute a DRBM domain.

It belongs to the ribonuclease III family. In terms of assembly, homodimer. Mg(2+) is required as a cofactor.

Its subcellular location is the cytoplasm. The catalysed reaction is Endonucleolytic cleavage to 5'-phosphomonoester.. Digests double-stranded RNA. Involved in the processing of primary rRNA transcript to yield the immediate precursors to the large and small rRNAs (23S and 16S). Processes some mRNAs, and tRNAs when they are encoded in the rRNA operon. Processes pre-crRNA and tracrRNA of type II CRISPR loci if present in the organism. The chain is Ribonuclease 3 from Mycoplasmopsis synoviae (strain 53) (Mycoplasma synoviae).